Reading from the N-terminus, the 373-residue chain is Ferroptosis suppressor protein 1 (373 aa).

G2 carries the N-myristoyl glycine lipid modification. Residues 13 to 29 (VVVVGGGFGGTAAASLL) traverse the membrane as a helical segment. 6-hydroxy-FAD is bound by residues 17–21 (GGGFG), R53, and V81. Position 167 is an N6-acetyllysine (K167). D284 contacts 6-hydroxy-FAD.

It belongs to the FAD-dependent oxidoreductase family. 6-hydroxy-FAD is required as a cofactor. In terms of processing, N-myristoylation at Gly-2 mediates the recruitment to lipid droplets and plasma membrane. Post-translationally, acetylation at Lys-167 prevents AIFM2 ubiquitination and degradation, thereby inhibiting ferroptosis. KAT2B mediates acetylation at Lys-167, while HDAC3 removes it. Ubiquitinated. AIFM2 undergoes 'Lys-29'-ubiquitination and proteasomal degradation, which is inhibited by acetylation at Lys-167.

The protein resides in the lipid droplet. Its subcellular location is the cell membrane. The protein localises to the cytoplasm. It localises to the mitochondrion membrane. It is found in the nucleus. The enzyme catalyses ubiquinone-10 + NADH + H(+) = ubiquinol-10 + NAD(+). The catalysed reaction is phylloquinone + NADH + H(+) = phylloquinol + NAD(+). It carries out the reaction menaquinone-4 + NADH + H(+) = menaquinol-4 + NAD(+). It catalyses the reaction menadione + NADH + H(+) = menadiol + NAD(+). Its activity is regulated as follows. The modification by 4-hydroxy-2-nonenal (HNE) adduction in mitochondria results in loss of the oxidoreductase activity and activation of a novel function in mitochondrial oxidative stress signaling. An NAD(P)H-dependent oxidoreductase that acts as a key inhibitor of ferroptosis. At the plasma membrane, catalyzes reduction of coenzyme Q/ubiquinone-10 to ubiquinol-10, a lipophilic radical-trapping antioxidant that prevents lipid oxidative damage and consequently ferroptosis. Acts in parallel to GPX4 to suppress phospholipid peroxidation and ferroptosis. This anti-ferroptotic function is independent of cellular glutathione levels. Also acts as a potent radical-trapping antioxidant by mediating warfarin-resistant vitamin K reduction in the canonical vitamin K cycle: catalyzes NAD(P)H-dependent reduction of vitamin K (phylloquinone, menaquinone-4 and menadione) to hydroquinone forms. Hydroquinones act as potent radical-trapping antioxidants inhibitor of phospholipid peroxidation and ferroptosis. May play a role in mitochondrial stress signaling. Upon oxidative stress, associates with the lipid peroxidation end product 4-hydroxy-2-nonenal (HNE) forming a lipid adduct devoid of oxidoreductase activity, which then translocates from mitochondria into the nucleus triggering DNA damage and cell death. The chain is Ferroptosis suppressor protein 1 (AIFM2) from Taeniopygia guttata (Zebra finch).